The primary structure comprises 254 residues: 3-deoxy-manno-octulosonate cytidylyltransferase (254 aa).

Belongs to the KdsB family.

The protein localises to the cytoplasm. It carries out the reaction 3-deoxy-alpha-D-manno-oct-2-ulosonate + CTP = CMP-3-deoxy-beta-D-manno-octulosonate + diphosphate. It functions in the pathway nucleotide-sugar biosynthesis; CMP-3-deoxy-D-manno-octulosonate biosynthesis; CMP-3-deoxy-D-manno-octulosonate from 3-deoxy-D-manno-octulosonate and CTP: step 1/1. The protein operates within bacterial outer membrane biogenesis; lipopolysaccharide biosynthesis. Its function is as follows. Activates KDO (a required 8-carbon sugar) for incorporation into bacterial lipopolysaccharide in Gram-negative bacteria. This chain is 3-deoxy-manno-octulosonate cytidylyltransferase, found in Polynucleobacter asymbioticus (strain DSM 18221 / CIP 109841 / QLW-P1DMWA-1) (Polynucleobacter necessarius subsp. asymbioticus).